Reading from the N-terminus, the 146-residue chain is MNSLSIFFIVVATAAVCLLFIQGYSIYENYGNIKEFNATHAAFEYSKSIGGTPALDRRVQDVNDTISDVKQKWRCVTYPGNGFVSASVFGFQAEVGPNNTRSIRKFNTMQQCIDFTFSDVINIDIYNPCVAPNINNAECQFLKSVL.

Residues M1–I21 form a helical; Signal-anchor for type II membrane protein membrane-spanning segment. The Virion surface segment spans residues Q22–L146.

This sequence belongs to the orthopoxvirus OPG155 protein family. As to quaternary structure, part of a stable entry-fusion complex (EFC) which is at least composed of proteins OPG143, OPG147, OPG155, OPG086, OPG094, OPG107, OPG104, and OPG099. Formation of the viral membrane is necessary for the assembly of the complex. Interacts directly with protein OPG107. Post-translationally, contains two intramolecular disulfide bonds. They are created by the viral disulfide bond formation pathway, a poxvirus-specific pathway that operates on the cytoplasmic side of the MV membranes.

Its subcellular location is the virion membrane. Envelope protein required for virus entry into host cell and for cell-cell fusion (syncytium formation). The polypeptide is Envelope protein OPG155 (OPG155) (Bos taurus (Bovine)).